Reading from the N-terminus, the 476-residue chain is Aspartyl/glutamyl-tRNA(Asn/Gln) amidotransferase subunit B (476 aa).

It belongs to the GatB/GatE family. GatB subfamily. In terms of assembly, heterotrimer of A, B and C subunits.

It catalyses the reaction L-glutamyl-tRNA(Gln) + L-glutamine + ATP + H2O = L-glutaminyl-tRNA(Gln) + L-glutamate + ADP + phosphate + H(+). It carries out the reaction L-aspartyl-tRNA(Asn) + L-glutamine + ATP + H2O = L-asparaginyl-tRNA(Asn) + L-glutamate + ADP + phosphate + 2 H(+). Allows the formation of correctly charged Asn-tRNA(Asn) or Gln-tRNA(Gln) through the transamidation of misacylated Asp-tRNA(Asn) or Glu-tRNA(Gln) in organisms which lack either or both of asparaginyl-tRNA or glutaminyl-tRNA synthetases. The reaction takes place in the presence of glutamine and ATP through an activated phospho-Asp-tRNA(Asn) or phospho-Glu-tRNA(Gln). This chain is Aspartyl/glutamyl-tRNA(Asn/Gln) amidotransferase subunit B, found in Clostridium kluyveri (strain ATCC 8527 / DSM 555 / NBRC 12016 / NCIMB 10680 / K1).